A 353-amino-acid polypeptide reads, in one-letter code: MTAIRPGSVTFENVTKKFGNFTALPNLSLTVEPGTLVTLLGLSGCGKTTTLRLLAGLEHPTSGRILIGGKDVTNLPANERDVSMVFQSYALFPHMTSLENVAYGLESSGFKKNEARERAEEGLKLVGLGGMGHRLPAELSGGQQQRVAVARALVLEPQVLLLDEPLSNLDARLRRRVRTEIRELQQRLGFTAVYVTHDQDEALAVSDTIIVMKEGGIAQKGSPRDLYEAPASAFIADFMGEANVVPCEVISAENGEAVIRVAGLTHRVPARNAQPGPAQLAIRPNAVTLQPQAGGGFSGTVAHSAYLGDHIEYEIETEHGKLFIVDPAVEQSLPLQTDVSIQFKTRGLAIINQ.

The 231-residue stretch at 9-239 folds into the ABC transporter domain; that stretch reads VTFENVTKKF…PASAFIADFM (231 aa). 41 to 48 contacts ATP; the sequence is GLSGCGKT.

The protein belongs to the ABC transporter superfamily. Fe(3+) ion importer (TC 3.A.1.10) family. In terms of assembly, the complex is composed of two ATP-binding proteins (FbpC), two transmembrane proteins (FbpB) and a solute-binding protein (FbpA).

The protein resides in the cell inner membrane. It catalyses the reaction Fe(3+)(out) + ATP + H2O = Fe(3+)(in) + ADP + phosphate + H(+). In terms of biological role, part of the ABC transporter complex FbpABC involved in Fe(3+) ions import. Responsible for energy coupling to the transport system. This Brucella melitensis biotype 1 (strain ATCC 23456 / CCUG 17765 / NCTC 10094 / 16M) protein is Fe(3+) ions import ATP-binding protein FbpC.